The sequence spans 380 residues: Cytochrome b (380 aa).

4 helical membrane passes run 33–53, 77–98, 113–133, and 178–198; these read FGSLLGLCLIIQILTGLFLAM, WLIRYMHANGASMFFICLFLHV, WNMGIMLLFTVMATAFMGYVL, and FFAFHFILPFIITALVLVHLL. H83 and H97 together coordinate heme b. Heme b is bound by residues H182 and H196. H201 contacts a ubiquinone. 4 helical membrane passes run 226 to 246, 288 to 308, 320 to 340, and 347 to 367; these read IKDFLGILILLMASMILTLFF, LGGVLALILSILILAFMPLLH, ITQIMYWTLVADLLILTWIGG, and FITIGQTASIAYFAIILIFMP.

This sequence belongs to the cytochrome b family. As to quaternary structure, the cytochrome bc1 complex contains 11 subunits: 3 respiratory subunits (MT-CYB, CYC1 and UQCRFS1), 2 core proteins (UQCRC1 and UQCRC2) and 6 low-molecular weight proteins (UQCRH/QCR6, UQCRB/QCR7, UQCRQ/QCR8, UQCR10/QCR9, UQCR11/QCR10 and a cleavage product of UQCRFS1). This cytochrome bc1 complex then forms a dimer. Heme b serves as cofactor.

It is found in the mitochondrion inner membrane. In terms of biological role, component of the ubiquinol-cytochrome c reductase complex (complex III or cytochrome b-c1 complex) that is part of the mitochondrial respiratory chain. The b-c1 complex mediates electron transfer from ubiquinol to cytochrome c. Contributes to the generation of a proton gradient across the mitochondrial membrane that is then used for ATP synthesis. In Microtus oregoni (Creeping vole), this protein is Cytochrome b (MT-CYB).